We begin with the raw amino-acid sequence, 424 residues long: MHRLQVVLGHLAGRPESSSALQAAPCSAGFLQASASDVVVVHGRRTPIGRASRGCFKDTTPDELLSAVLTAVLQDVKLKPEQLGDISVGNVLQPGAGAIMARIAQFLSGIPETVPLSTVNRQCSSGLQAVANIAGGIRNGSYDIGMACGVESMTLSQRGNHGNISSRLLENEKARDCLIPMGITSENVAERFGVSRQKQDAFALASQQKAASAQSRGCFHAEIVPVTTTVLNDKGDKKTITVSQDEGVRPSTTMQGLAKLKPAFKDGGSTTAGNSSQVSDGAAAVLLARRSKAEELGLPILGVLRSYAVVGVPPDVMGIGPAYAIPAALQKAGLTVNDIDIFEINEAFASQAVYCVEKLGIPAEKVNPLGGAIALGHPLGCTGARQVVTLLNELKRRGRRAYGVVSMCIGTGMGAAAVFEYPGN.

A peroxisome-targeting transit peptide spans 1–26; that stretch reads MHRLQVVLGHLAGRPESSSALQAAPC. The tract at residues 1 to 26 is PTS2-type peroxisomal targeting signal; sequence MHRLQVVLGHLAGRPESSSALQAAPC. The active-site Acyl-thioester intermediate is the cysteine 123. 2 positions are modified to N6-acetyllysine: lysine 173 and lysine 234. CoA-binding residues include arginine 249, threonine 252, and serine 276. Cysteine 408 serves as the catalytic Proton donor/acceptor.

Belongs to the thiolase-like superfamily. Thiolase family. In terms of assembly, homodimer. Interacts (via PTS2-type peroxisomal targeting signal region) with PEX7; leading to its translocation into peroxisomes. In terms of tissue distribution, mainly expressed in liver; weaker levels in kidney, intestine and white adipose tissue.

The protein resides in the peroxisome. It catalyses the reaction an acyl-CoA + acetyl-CoA = a 3-oxoacyl-CoA + CoA. The enzyme catalyses 2 acetyl-CoA = acetoacetyl-CoA + CoA. It carries out the reaction hexanoyl-CoA + acetyl-CoA = 3-oxooctanoyl-CoA + CoA. The catalysed reaction is tetradecanoyl-CoA + acetyl-CoA = 3-oxohexadecanoyl-CoA + CoA. It catalyses the reaction 3-oxohexadecanedioyl-CoA + CoA = tetradecanedioyl-CoA + acetyl-CoA. The enzyme catalyses 3-oxo-(6Z,9Z,12Z,15Z,18Z,21Z)-tetracosahexaenoyl-CoA + CoA = (4Z,7Z,10Z,13Z,16Z,19Z)-docosahexaenoyl-CoA + acetyl-CoA. The protein operates within lipid metabolism; peroxisomal fatty acid beta-oxidation. Functionally, responsible for the thiolytic cleavage of straight chain 3-keto fatty acyl-CoAs (3-oxoacyl-CoAs). Plays an important role in fatty acid peroxisomal beta-oxidation. Catalyzes the cleavage of short, medium, long, and very long straight chain 3-oxoacyl-CoAs. In Mus musculus (Mouse), this protein is 3-ketoacyl-CoA thiolase B, peroxisomal.